The sequence spans 348 residues: MSGTADRLAARIERAWQDGGALQWALRPLALLMRGAVTARRALYRCGAWRTERLGVPVIVVGNRVAGGAGKTPTTLAIVAALQQAGRQPGIVSRGHGSREREARPVSADSTAQSVGDEPLLMQRRAQVPVWVGRDRVAAGRALLAAHPQVDVLVCDDGLQHLRLRRDVEVIVFDERGAGNGWLLPAGPLREPIDAPTDARQIVLYNAERPSTALPGHCARRRLAGLVELGAWWQGADARAELPPELKRQPVLASAGIGQPGRFFDSLRTLGLAIEPWPLPDHHGFDTLPWPAQTRDVIVTEKDAVKLPLQRLRAERPGLRVWVAPLLFDLPETFVSELLAALPARRPD.

65 to 72 is a binding site for ATP; sequence VAGGAGKT. A disordered region spans residues 89-117; the sequence is PGIVSRGHGSREREARPVSADSTAQSVGD.

Belongs to the LpxK family.

It catalyses the reaction a lipid A disaccharide + ATP = a lipid IVA + ADP + H(+). It functions in the pathway glycolipid biosynthesis; lipid IV(A) biosynthesis; lipid IV(A) from (3R)-3-hydroxytetradecanoyl-[acyl-carrier-protein] and UDP-N-acetyl-alpha-D-glucosamine: step 6/6. Functionally, transfers the gamma-phosphate of ATP to the 4'-position of a tetraacyldisaccharide 1-phosphate intermediate (termed DS-1-P) to form tetraacyldisaccharide 1,4'-bis-phosphate (lipid IVA). In Leptothrix cholodnii (strain ATCC 51168 / LMG 8142 / SP-6) (Leptothrix discophora (strain SP-6)), this protein is Tetraacyldisaccharide 4'-kinase.